Consider the following 362-residue polypeptide: Sterol-4-alpha-carboxylate 3-dehydrogenase, decarboxylating (362 aa).

N-acetylmethionine is present on methionine 1. Tyrosine 161 serves as the catalytic Proton acceptor. NAD(+) is bound at residue lysine 165. Residues 287–307 (WMAYYLAFLLSLLVMVVSPLI) form a helical membrane-spanning segment. A Prevents secretion from ER motif is present at residues 359–362 (RKDK).

Belongs to the 3-beta-HSD family. As to quaternary structure, homodimer.

The protein localises to the endoplasmic reticulum membrane. It localises to the lipid droplet. The catalysed reaction is a 3beta-hydroxysteroid-4alpha-carboxylate + NADP(+) = a 3-oxosteroid + CO2 + NADPH. It catalyses the reaction a 3beta-hydroxysteroid-4alpha-carboxylate + NAD(+) = a 3-oxosteroid + CO2 + NADH. The enzyme catalyses 4alpha-carboxyzymosterol + NADP(+) = zymosterone + CO2 + NADPH. It carries out the reaction 4alpha-carboxy-4beta-methyl-5alpha-cholest-8-en-3beta-ol + NADP(+) = 4alpha-methyl-5alpha-cholest-8-en-3-one + CO2 + NADPH. The catalysed reaction is 4alpha-carboxy-5alpha-cholest-8-ene-3beta-ol + NADP(+) = 5alpha-cholest-8-en-3-one + CO2 + NADPH. It catalyses the reaction 4beta-methylzymosterol-4alpha-carboxylate + NADP(+) = 3-dehydro-4-methylzymosterol + CO2 + NADPH. The enzyme catalyses 4beta-methylzymosterol-4alpha-carboxylate + NAD(+) = 3-dehydro-4-methylzymosterol + CO2 + NADH. It carries out the reaction 4alpha-carboxy-5alpha-cholest-8-ene-3beta-ol + NAD(+) = 5alpha-cholest-8-en-3-one + CO2 + NADH. The catalysed reaction is 4alpha-carboxy-4beta-methyl-5alpha-cholest-8-en-3beta-ol + NAD(+) = 4alpha-methyl-5alpha-cholest-8-en-3-one + CO2 + NADH. It catalyses the reaction 4alpha-carboxyzymosterol + NAD(+) = zymosterone + CO2 + NADH. It participates in steroid biosynthesis; zymosterol biosynthesis; zymosterol from lanosterol: step 4/6. In terms of biological role, catalyzes the NAD(P)(+)-dependent oxidative decarboxylation of the C4 methyl groups of 4-alpha-carboxysterols in post-squalene cholesterol biosynthesis. Plays a role in the regulation of the endocytic trafficking of EGFR. This chain is Sterol-4-alpha-carboxylate 3-dehydrogenase, decarboxylating (Nsdhl), found in Mus musculus (Mouse).